Here is a 465-residue protein sequence, read N- to C-terminus: A-type ATP synthase subunit B (465 aa).

This sequence belongs to the ATPase alpha/beta chains family. As to quaternary structure, has multiple subunits with at least A(3), B(3), C, D, E, F, H, I and proteolipid K(x).

It is found in the cell membrane. Component of the A-type ATP synthase that produces ATP from ADP in the presence of a proton gradient across the membrane. The B chain is a regulatory subunit. In Thermococcus onnurineus (strain NA1), this protein is A-type ATP synthase subunit B.